The sequence spans 227 residues: Ribosomal RNA small subunit methyltransferase G (227 aa).

S-adenosyl-L-methionine is bound by residues G74, L79, 124-125 (AE), and R142.

The protein belongs to the methyltransferase superfamily. RNA methyltransferase RsmG family.

It localises to the cytoplasm. Functionally, specifically methylates the N7 position of guanine in position 518 of 16S rRNA. In Mycolicibacterium vanbaalenii (strain DSM 7251 / JCM 13017 / BCRC 16820 / KCTC 9966 / NRRL B-24157 / PYR-1) (Mycobacterium vanbaalenii), this protein is Ribosomal RNA small subunit methyltransferase G.